Here is a 979-residue protein sequence, read N- to C-terminus: Disks large-associated protein 3 (979 aa).

A compositionally biased stretch (basic and acidic residues) spans 1–10 (MRGYHGDRGS). Disordered stretches follow at residues 1 to 20 (MRGY…FADQ), 52 to 95 (AGLG…MYPG), 136 to 169 (FHTL…SPSR), 182 to 291 (AKSH…CLEG), 400 to 429 (AMGD…TRRS), and 537 to 581 (FRKA…RCSS). Ser-58 is subject to Phosphoserine. Over residues 73–86 (PEGGPAGAGVGGGS) the composition is skewed to gly residues. Over residues 190 to 202 (PGKRDYNGPKAEG) the composition is skewed to basic and acidic residues. Residues 203-218 (RGGSGGDSYPGPGSGG) show a composition bias toward gly residues. Basic residues predominate over residues 221 to 246 (TSHHHHHHHHHHHHQSRHGKRSKSKD). Ser-406, Ser-409, Ser-412, and Ser-416 each carry phosphoserine. The span at 540-549 (APPPIPPGSQ) shows a compositional bias: pro residues. Phosphoserine occurs at positions 643 and 645. 2 disordered regions span residues 741–790 (EGYP…RASP) and 908–940 (EEKK…DRQR). 2 stretches are compositionally biased toward basic and acidic residues: residues 769 to 779 (GRRDSWIERGS) and 927 to 940 (PVKE…DRQR). Ser-932, Ser-935, and Ser-967 each carry phosphoserine.

Belongs to the SAPAP family. Interacts with DLG4/PSD-95.

It localises to the cell membrane. The protein resides in the postsynaptic density. The protein localises to the synapse. In terms of biological role, may play a role in the molecular organization of synapses and neuronal cell signaling. Could be an adapter protein linking ion channel to the subsynaptic cytoskeleton. May induce enrichment of PSD-95/SAP90 at the plasma membrane. In Homo sapiens (Human), this protein is Disks large-associated protein 3 (DLGAP3).